The sequence spans 97 residues: Large ribosomal subunit protein uL23 (97 aa).

It belongs to the universal ribosomal protein uL23 family. As to quaternary structure, part of the 50S ribosomal subunit. Contacts protein L29, and trigger factor when it is bound to the ribosome.

One of the early assembly proteins it binds 23S rRNA. One of the proteins that surrounds the polypeptide exit tunnel on the outside of the ribosome. Forms the main docking site for trigger factor binding to the ribosome. This is Large ribosomal subunit protein uL23 from Lactococcus lactis subsp. cremoris (strain SK11).